The chain runs to 136 residues: ATP synthase epsilon chain 2 (136 aa).

It belongs to the ATPase epsilon chain family. F-type ATPases have 2 components, CF(1) - the catalytic core - and CF(0) - the membrane proton channel. CF(1) has five subunits: alpha(3), beta(3), gamma(1), delta(1), epsilon(1). CF(0) has three main subunits: a, b and c.

It is found in the cell inner membrane. Functionally, produces ATP from ADP in the presence of a proton gradient across the membrane. The chain is ATP synthase epsilon chain 2 from Nitrobacter hamburgensis (strain DSM 10229 / NCIMB 13809 / X14).